The chain runs to 233 residues: Small ribosomal subunit protein uS3 (233 aa).

The KH type-2 domain maps to 39-107; that stretch reads IRTFLKRKLY…EVNINIKEER (69 aa). The interval 211–233 is disordered; sequence GVQPEKTEESAPAKKPRRARRGK. Over residues 213–222 the composition is skewed to basic and acidic residues; sequence QPEKTEESAP. Residues 224 to 233 show a composition bias toward basic residues; it reads KKPRRARRGK.

It belongs to the universal ribosomal protein uS3 family. As to quaternary structure, part of the 30S ribosomal subunit. Forms a tight complex with proteins S10 and S14.

In terms of biological role, binds the lower part of the 30S subunit head. Binds mRNA in the 70S ribosome, positioning it for translation. In Campylobacter lari (strain RM2100 / D67 / ATCC BAA-1060), this protein is Small ribosomal subunit protein uS3.